Here is a 426-residue protein sequence, read N- to C-terminus: Glucose-6-phosphate isomerase (426 aa).

The Proton donor role is filled by E282. Active-site residues include H303 and K417.

Belongs to the GPI family.

It is found in the cytoplasm. The catalysed reaction is alpha-D-glucose 6-phosphate = beta-D-fructose 6-phosphate. It functions in the pathway carbohydrate biosynthesis; gluconeogenesis. Its pathway is carbohydrate degradation; glycolysis; D-glyceraldehyde 3-phosphate and glycerone phosphate from D-glucose: step 2/4. Catalyzes the reversible isomerization of glucose-6-phosphate to fructose-6-phosphate. In Onion yellows phytoplasma (strain OY-M), this protein is Glucose-6-phosphate isomerase.